The chain runs to 1073 residues: TSC22 domain family protein 1 (1073 aa).

Residues 1-98 (MHQPPESTAA…SQAQLQAQPL (98 aa)) form a required for interaction with TGFBR1 and promotion of TGF-beta signaling region. 6 disordered regions span residues 22-110 (MAHP…KKSG), 125-205 (ISSN…PHLP), 220-288 (LHHH…SPAS), 458-486 (VTSE…SVGS), 607-628 (YSQA…QQLQ), and 742-766 (VQQP…QVVP). Positions 36-45 (GSASALNAAG) are enriched in low complexity. The span at 58 to 70 (FPPPSLLQPPPPA) shows a compositional bias: pro residues. Low complexity predominate over residues 84-100 (SLNLLSQAQLQAQPLAP). A compositionally biased stretch (acidic residues) spans 133–142 (EDTESYDDLD). A compositionally biased stretch (basic residues) spans 220-240 (LHHHHQIHHGHHLQHGHHHPS). The segment covering 257 to 271 (PVSRKLSTTGSSDSI) has biased composition (polar residues). Residue serine 263 is modified to Phosphoserine. Low complexity-rich tracts occupy residues 272–288 (TPVA…SPAS) and 465–483 (TSGS…YTES). Pro residues predominate over residues 614-625 (VQTPLPGAPPPQ). Residues 742–764 (VQQPSTQVPPSVIQQGAPPSSQV) show a composition bias toward polar residues. The segment at 1006–1027 (LKEQIKELIEKNSQLEQENNLL) is leucine-zipper. Residues 1037-1073 (AQFQAQLQTGSPPATTQPQGTTQPPAQPASQGSGPTA) are disordered. Residues 1044–1073 (QTGSPPATTQPQGTTQPPAQPASQGSGPTA) show a composition bias toward low complexity.

Belongs to the TSC-22/Dip/Bun family. In terms of assembly, forms homodimers. Forms heterodimers. Component of a complex composed of TSC22D1 (via N-terminus), TGFBR1 and TGFBR2; the interaction between TSC22D1 and TGFBR1 is inhibited by SMAD7 and promoted by TGFB1. Interacts with SMAD7; the interaction requires TGF-beta and the interaction is inhibited by TGFBR1. Interacts with TPT1/fortilin; interaction results in the destabilization of TSC22D1 protein and prevents TSC22D1-mediated apoptosis. Interacts with SMAD4 (via N-terminus). Interacts with ACVRL1/ALK1, ACVR1/ALK2, BMPR1A/ALK3, ACVR1B/ALK4, BMPR1B/ALK6, ACVR2A/ACTRII, and BMPR2. Interacts with SMAD6. Interacts with TFE3; the interaction is enhanced in the presence of TGF-beta. Forms a heterodimer with TSC22D4/THG1. As to quaternary structure, forms a heterodimer with TSC22D4/THG1. Interacts with histone H1-2. Interacts with GNL3. In terms of assembly, interacts with histone H1-2. In terms of tissue distribution, ubiquitously expressed in adult tissues. Expressed in the postmitotic epithelial compartment at the top of intestinal mucosal villi.

It localises to the cytoplasm. The protein localises to the nucleus. The protein resides in the cell membrane. It is found in the mitochondrion. In terms of biological role, transcriptional repressor. Acts on the C-type natriuretic peptide (CNP) promoter. Acts to promote CASP3-mediated apoptosis. Positively regulates TGF-beta signaling by interacting with SMAD7 which inhibits binding of SMAD7 to TGFBR1, preventing recruitment of SMURF ubiquitin ligases to TGFBR1 and inhibiting SMURF-mediated ubiquitination and degradation of TGFBR1. Contributes to enhancement of TGF-beta signaling by binding to and modulating the transcription activator activity of SMAD4. Promotes TGF-beta-induced transcription of COL1A2; via its interaction with TFE3 at E-boxes in the gene proximal promoter. Plays a role in the repression of hematopoietic precursor cell growth. Promotes IL2 deprivation-induced apoptosis in T-lymphocytes, via repression of TSC22D3/GILZ transcription and activation of the caspase cascade. Its function is as follows. May act to negatively regulate TGFB3 signaling and thereby inhibit cell death in mammary gland cells. Positively regulates cell death in response to TGFB3 during mammary gland involution. The protein is TSC22 domain family protein 1 of Homo sapiens (Human).